The sequence spans 970 residues: uncharacterized protein (970 aa).

The helical transmembrane segment at 12 to 32 threads the bilayer; it reads VIFFSVFFVIFFLFIESSVGF.

The protein to E.coli YtfN.

Its subcellular location is the membrane. This is an uncharacterized protein from Buchnera aphidicola subsp. Acyrthosiphon pisum (strain APS) (Acyrthosiphon pisum symbiotic bacterium).